The sequence spans 520 residues: 6-phosphofructo-2-kinase/fructose-2,6-bisphosphatase 3 (520 aa).

Residues 1 to 245 (MPLELTQSRV…VYYLMNIHVQ (245 aa)) form a 6-phosphofructo-2-kinase region. Position 42–50 (42–50 (GLPARGKTY)) interacts with ATP. The beta-D-fructose 6-phosphate site is built by arginine 75 and arginine 99. Residue aspartate 125 is part of the active site. Residues threonine 127 and arginine 133 each contribute to the beta-D-fructose 6-phosphate site. The active site involves cysteine 155. Position 164 to 169 (164 to 169 (NIMEVK)) interacts with ATP. Residues lysine 169, arginine 190, and tyrosine 194 each contribute to the beta-D-fructose 6-phosphate site. The tract at residues 246–520 (PRTIYLCRHG…RSSADSSRKH (275 aa)) is fructose-2,6-bisphosphatase. Beta-D-fructose 2,6-bisphosphate is bound at residue arginine 253. The active-site Tele-phosphohistidine intermediate is histidine 254. Asparagine 260 and glycine 266 together coordinate beta-D-fructose 2,6-bisphosphate. The active-site Proton donor/acceptor is the glutamate 323. Beta-D-fructose 2,6-bisphosphate-binding residues include tyrosine 334, arginine 348, lysine 352, tyrosine 363, glutamine 389, and arginine 393. 345–348 (YALR) is an ATP binding site. ATP contacts are provided by residues 389–393 (QAVLR) and tyrosine 425. Residues 443-520 (RERSEDAKKG…RSSADSSRKH (78 aa)) are disordered. Serine 461 is subject to Phosphoserine; by AMPK. Phosphothreonine is present on threonine 463. Serine 467 is subject to Phosphoserine. Residue threonine 471 is modified to Phosphothreonine; by PKC. Polar residues predominate over residues 502 to 520 (LPGQNMKGSRSSADSSRKH).

It in the C-terminal section; belongs to the phosphoglycerate mutase family. Homodimer. Forms a heterodimer with PFKFB2. In terms of processing, phosphorylation by AMPK stimulates activity. As to expression, ubiquitous.

The enzyme catalyses beta-D-fructose 2,6-bisphosphate + H2O = beta-D-fructose 6-phosphate + phosphate. It carries out the reaction beta-D-fructose 6-phosphate + ATP = beta-D-fructose 2,6-bisphosphate + ADP + H(+). In terms of biological role, catalyzes both the synthesis and degradation of fructose 2,6-bisphosphate. The polypeptide is 6-phosphofructo-2-kinase/fructose-2,6-bisphosphatase 3 (PFKFB3) (Homo sapiens (Human)).